Consider the following 504-residue polypeptide: Pyrichalasin C-7 hydroxylase (504 aa).

A signal peptide spans 1–17 (MLNSAACIVLAITAVLG). Cys449 contacts heme.

The protein belongs to the cytochrome P450 family. Requires heme as cofactor.

Its pathway is mycotoxin biosynthesis. Its function is as follows. Cytochrome P450 monooxygenase; part of the gene cluster that mediates the biosynthesis of the mycotoxin pyrichalasin H, a tyrosine-derived cytochalasan that inhibits the growth of rice seedlings, but also inhibits lymphocyte capping and actin polymerization and alters cell morphology. Pyrichalasin H is indicated as the responsible agent for the genus-specific pathogenicity of M.grisea toward crabgrass. The first step in the pathway is catalyzed by the O-methyltransferase pyiA which methylates free tyrosine to generate the precursor O-methyltyrosine. The hybrid PKS-NRPS pyiS, assisted by the enoyl reductase pyiC, are responsible for fusion of the O-methyltyrosine precursor and the polyketide backbone. The polyketide synthase module (PKS) of pyiS is responsible for the synthesis of the polyketide backbone and the downstream nonribosomal peptide synthetase (NRPS) amidates the carboxyl end of the polyketide with the O-methyltyrosine precursor. As the NRPS A-domain demonstrates substrate tolerance, pyiS can also use phenylalanine, tyrosine and even para-chlorophenylalanine as amino acid precursor, which leads to the production of novel cytochalasans, including halogenated cytochalasans. Because pyiS lacks a designated enoylreductase (ER) domain, the required activity is provided the enoyl reductase pyiC. Reduction by the hydrolyase pyiE leads to 1,5-dihydropyrrolone, which is substrate for dehydration and intra-molecular Diels-Alder cyclization by the Diels-Alderase pyiF to yield the required isoindolone-fused macrocycle. The tailoring cytochrome P450 monooxygenases piyD and piyG catalyze the hydroxylation at C-18 and C-7, respectivily, whereas the short-chain dehydrogenase/reductase pyiH reduces the carbonyl at C-21 in preparation for the transfer of an acetyl group by the acetyltransferase pyiB. These 3 reactions whose order is not clear yet, lead to the production of O-methylpyrichalasin J, a deacetylated pyrichalasin H. Finally, pyiB to converts O-methylpyrichalasin J into the final product pyrichalasin H via acetylation of C-21. This is Pyrichalasin C-7 hydroxylase from Pyricularia grisea (Crabgrass-specific blast fungus).